The following is a 377-amino-acid chain: uncharacterized protein (377 aa).

The first 22 residues, 1–22, serve as a signal peptide directing secretion; that stretch reads MKFKYGTVVLGSFLGLSVVLAA. The N-palmitoyl cysteine moiety is linked to residue C23. Residue C23 is the site of S-diacylglycerol cysteine attachment. A disordered region spans residues 217–260; that stretch reads AKANGETNQKGRKAAKSNKTALVQLKNGADTTTNEENKDTKTSD. Basic and acidic residues predominate over residues 251-260; sequence EENKDTKTSD.

This sequence belongs to the MG185/MG260 family.

It localises to the cell membrane. This is an uncharacterized protein from Mycoplasma pneumoniae (strain ATCC 29342 / M129 / Subtype 1) (Mycoplasmoides pneumoniae).